The chain runs to 106 residues: Large ribosomal subunit protein uL24 (106 aa).

This sequence belongs to the universal ribosomal protein uL24 family. As to quaternary structure, part of the 50S ribosomal subunit.

One of two assembly initiator proteins, it binds directly to the 5'-end of the 23S rRNA, where it nucleates assembly of the 50S subunit. Functionally, one of the proteins that surrounds the polypeptide exit tunnel on the outside of the subunit. The chain is Large ribosomal subunit protein uL24 from Thermosipho africanus (strain TCF52B).